The primary structure comprises 439 residues: Serine/threonine-protein kinase 2 (439 aa).

Residues 87–439 enclose the Protein kinase domain; that stretch reads NDDFYHISTG…IFSDWINGGN (353 aa). ATP contacts are provided by residues 93-101 and lysine 117; that span reads ISTGGYGIV. Catalysis depends on aspartate 307, which acts as the Proton acceptor.

The protein belongs to the protein kinase superfamily. Ser/Thr protein kinase family. Phosphorylated in vivo. Autophosphorylated in vitro.

Its subcellular location is the host endoplasmic reticulum. The protein resides in the host endoplasmic reticulum-Golgi intermediate compartment. It catalyses the reaction L-seryl-[protein] + ATP = O-phospho-L-seryl-[protein] + ADP + H(+). It carries out the reaction L-threonyl-[protein] + ATP = O-phospho-L-threonyl-[protein] + ADP + H(+). In terms of biological role, essential serine-protein kinase involved in the early stage of virion morphogenesis. The chain is Serine/threonine-protein kinase 2 (OPG054) from Vaccinia virus (strain Tian Tan) (VACV).